The sequence spans 165 residues: Large ribosomal subunit protein uL10 (165 aa).

This sequence belongs to the universal ribosomal protein uL10 family. As to quaternary structure, part of the ribosomal stalk of the 50S ribosomal subunit. The N-terminus interacts with L11 and the large rRNA to form the base of the stalk. The C-terminus forms an elongated spine to which L12 dimers bind in a sequential fashion forming a multimeric L10(L12)X complex.

Forms part of the ribosomal stalk, playing a central role in the interaction of the ribosome with GTP-bound translation factors. The sequence is that of Large ribosomal subunit protein uL10 from Mycoplasma mycoides subsp. mycoides SC (strain CCUG 32753 / NCTC 10114 / PG1).